Reading from the N-terminus, the 249-residue chain is Pulmonary surfactant-associated protein A (249 aa).

Positions 1–20 are cleaved as a signal peptide; it reads MLRWPLALTFLLLAVSGLEC. The 73-residue stretch at 28 to 100 folds into the Collagen-like domain; that stretch reads ASPGIPGTPG…PGERGPPGLP (73 aa). Residues 29-102 form a disordered region; it reads SPGIPGTPGS…ERGPPGLPAH (74 aa). Residues Pro30, Pro33, Pro36, Pro42, Pro54, Pro57, Pro63, and Pro70 each carry the 4-hydroxyproline modification. The segment covering 42–51 has biased composition (basic and acidic residues); that stretch reads PGRDGRDGIK. Residues 84–93 are compositionally biased toward basic and acidic residues; it reads ERGEKGEPGE. The region spanning 133–249 is the C-type lectin domain; it reads AVGEKVFSTN…QQYRLAICEF (117 aa). 2 cysteine pairs are disulfide-bonded: Cys155–Cys247 and Cys225–Cys239. Residue Asn208 is glycosylated (N-linked (GlcNAc...) asparagine). Glu216, Arg218, Asn235, and Asp236 together coordinate Ca(2+).

The protein belongs to the SFTPA family. In terms of assembly, oligomeric complex of 6 set of homotrimers.

Its subcellular location is the secreted. The protein localises to the extracellular space. The protein resides in the extracellular matrix. It is found in the surface film. Functionally, in presence of calcium ions, it binds to surfactant phospholipids and contributes to lower the surface tension at the air-liquid interface in the alveoli of the mammalian lung and is essential for normal respiration. Enhances the expression of MYO18A/SP-R210 on alveolar macrophages. The protein is Pulmonary surfactant-associated protein A (SFTPA1) of Sus scrofa (Pig).